Consider the following 88-residue polypeptide: Small ribosomal subunit protein uS15 (88 aa).

Belongs to the universal ribosomal protein uS15 family. Part of the 30S ribosomal subunit. Forms a bridge to the 50S subunit in the 70S ribosome, contacting the 23S rRNA.

Its function is as follows. One of the primary rRNA binding proteins, it binds directly to 16S rRNA where it helps nucleate assembly of the platform of the 30S subunit by binding and bridging several RNA helices of the 16S rRNA. Forms an intersubunit bridge (bridge B4) with the 23S rRNA of the 50S subunit in the ribosome. The sequence is that of Small ribosomal subunit protein uS15 from Mycoplasma mobile (strain ATCC 43663 / 163K / NCTC 11711) (Mesomycoplasma mobile).